The primary structure comprises 120 residues: Large ribosomal subunit protein bL12 (120 aa).

This sequence belongs to the bacterial ribosomal protein bL12 family. In terms of assembly, homodimer. Part of the ribosomal stalk of the 50S ribosomal subunit. Forms a multimeric L10(L12)X complex, where L10 forms an elongated spine to which 2 to 4 L12 dimers bind in a sequential fashion. Binds GTP-bound translation factors.

Its function is as follows. Forms part of the ribosomal stalk which helps the ribosome interact with GTP-bound translation factors. Is thus essential for accurate translation. This Listeria innocua serovar 6a (strain ATCC BAA-680 / CLIP 11262) protein is Large ribosomal subunit protein bL12.